A 284-amino-acid polypeptide reads, in one-letter code: GPN-loop GTPase 3 (284 aa).

Gly-13–Thr-18 lines the GTP pocket. A Gly-Pro-Asn (GPN)-loop; involved in dimer interface motif is present at residues Gly-72–Asn-74. GTP is bound at residue Thr-174–Asp-177. Residues Glu-262–Glu-284 form a disordered region.

Belongs to the GPN-loop GTPase family. As to quaternary structure, heterodimer with GPN1. Binds to RNA polymerase II (RNAPII). Interacts directly with subunits RPB4 and RPB7 and the CTD of RPB1.

Functionally, small GTPase required for proper localization of RNA polymerase II (RNAPII). May act at an RNAP assembly step prior to nuclear import. The protein is GPN-loop GTPase 3 of Mus musculus (Mouse).